A 423-amino-acid polypeptide reads, in one-letter code: Glucose-1-phosphate adenylyltransferase (423 aa).

Alpha-D-glucose 1-phosphate is bound by residues tyrosine 107, glycine 172, 187–188, and serine 205; that span reads EK.

This sequence belongs to the bacterial/plant glucose-1-phosphate adenylyltransferase family. In terms of assembly, homotetramer.

The enzyme catalyses alpha-D-glucose 1-phosphate + ATP + H(+) = ADP-alpha-D-glucose + diphosphate. Its pathway is glycan biosynthesis; glycogen biosynthesis. Its function is as follows. Involved in the biosynthesis of ADP-glucose, a building block required for the elongation reactions to produce glycogen. Catalyzes the reaction between ATP and alpha-D-glucose 1-phosphate (G1P) to produce pyrophosphate and ADP-Glc. In Cereibacter sphaeroides (strain ATCC 17025 / ATH 2.4.3) (Rhodobacter sphaeroides), this protein is Glucose-1-phosphate adenylyltransferase.